The sequence spans 846 residues: Enhancer of polycomb-like protein 1 (846 aa).

Disordered stretches follow at residues 169–204, 391–466, 587–607, 682–702, and 759–804; these read FNSKAEGSSGDVKSDKEQGRGMRVKGKDREKEKGDA, TSDE…APDA, EKKRPRSIDEVEEEMQEQSPK, AADAKPPPAPIFQKPPAPQPN, and QVQA…GVKQ. The segment covering 180-203 has biased composition (basic and acidic residues); sequence VKSDKEQGRGMRVKGKDREKEKGD. The span at 411 to 426 shows a compositional bias: polar residues; that stretch reads PSLSGQTPLTSGQSSS. Over residues 432 to 452 the composition is skewed to basic and acidic residues; that stretch reads TDKDREERAQRERYDAQRNAE. A coiled-coil region spans residues 434–490; it reads KDREERAQRERYDAQRNAERSGILSGRSNAPDALKERLQALQQKTEEMLARKKEQDA. A compositionally biased stretch (pro residues) spans 686 to 702; it reads KPPPAPIFQKPPAPQPN. Positions 759–773 are enriched in low complexity; sequence QVQAQGQGHPQAHLQ. The segment covering 783-796 has biased composition (polar residues); the sequence is NGVNSPMPNGQQML.

It belongs to the enhancer of polycomb family. As to quaternary structure, component of the NuA4 histone acetyltransferase complex.

The protein localises to the nucleus. Component of the NuA4 histone acetyltransferase complex which is involved in transcriptional activation of selected genes principally by acetylation of nucleosomal histone H4 and H2A. The NuA4 complex is also involved in DNA repair. Involved in gene silencing by neighboring heterochromatin, blockage of the silencing spreading along the chromosome, and required for cell cycle progression through G2/M. This is Enhancer of polycomb-like protein 1 (EPL1) from Cryptococcus neoformans var. neoformans serotype D (strain JEC21 / ATCC MYA-565) (Filobasidiella neoformans).